The following is a 41-amino-acid chain: Alpha-conotoxin CIB (41 aa).

The propeptide occupies 1–21 (SDGRNEAANDEASDVIELALK). Intrachain disulfides connect C23–C29 and C24–C37. Residues 25 to 27 (SNP) are ser-Xaa-Pro motif, crucial for potent interaction with nAChR. C37 carries the post-translational modification Cysteine amide.

Belongs to the conotoxin A superfamily. As to expression, expressed by the venom duct.

It is found in the secreted. Alpha-conotoxins act on postsynaptic membranes, they bind to the nicotinic acetylcholine receptors (nAChR) and thus inhibit them. This toxin blocks rat neuronal nAChR alpha-3-beta-2/CHRNA3-CHRNB2 (IC(50)=128.9 nM) and alpha-7/CHRNA7 (IC(50)=1511 nM). In vivo, intramuscular injection into zebrafish does not produce any effect on the locomotion of zebrafish. The chain is Alpha-conotoxin CIB from Conus catus (Cat cone).